The following is a 264-amino-acid chain: uncharacterized protein (264 aa).

The disordered stretch occupies residues 235–264 (ESSDEEDNDDDIINNDTNNDINNDDIEIKT). A compositionally biased stretch (acidic residues) spans 237 to 247 (SDEEDNDDDII).

This is an uncharacterized protein from Acanthamoeba polyphaga mimivirus (APMV).